Here is a 385-residue protein sequence, read N- to C-terminus: 1-deoxy-D-xylulose 5-phosphate reductoisomerase (385 aa).

Residues T13, G14, S15, I16, N40, and N122 each coordinate NADPH. K123 serves as a coordination point for 1-deoxy-D-xylulose 5-phosphate. E124 contributes to the NADPH binding site. Position 148 (D148) interacts with Mn(2+). The 1-deoxy-D-xylulose 5-phosphate site is built by S149, E150, S177, and H200. E150 is a Mn(2+) binding site. Position 206 (G206) interacts with NADPH. Residues S213, N218, K219, and E222 each contribute to the 1-deoxy-D-xylulose 5-phosphate site. E222 serves as a coordination point for Mn(2+).

This sequence belongs to the DXR family. It depends on Mg(2+) as a cofactor. Mn(2+) serves as cofactor.

It catalyses the reaction 2-C-methyl-D-erythritol 4-phosphate + NADP(+) = 1-deoxy-D-xylulose 5-phosphate + NADPH + H(+). The protein operates within isoprenoid biosynthesis; isopentenyl diphosphate biosynthesis via DXP pathway; isopentenyl diphosphate from 1-deoxy-D-xylulose 5-phosphate: step 1/6. Catalyzes the NADPH-dependent rearrangement and reduction of 1-deoxy-D-xylulose-5-phosphate (DXP) to 2-C-methyl-D-erythritol 4-phosphate (MEP). The protein is 1-deoxy-D-xylulose 5-phosphate reductoisomerase of Francisella tularensis subsp. tularensis (strain WY96-3418).